Consider the following 1776-residue polypeptide: 6-methylsalicylic acid synthase (1776 aa).

Low complexity predominate over residues 1–18 (MHSVSPSTYPSGGTSPAP). The segment at 1–26 (MHSVSPSTYPSGGTSPAPADTPGTEY) is disordered. A Ketosynthase family 3 (KS3) domain is found at 32 to 457 (SNDVAVVGMA…GTVSHAVIEE (426 aa)). Residues cysteine 204, histidine 339, and histidine 379 each act as for beta-ketoacyl synthase activity in the active site. The malonyl-CoA:ACP transacylase (MAT) domain stretch occupies residues 567-880 (VWVFSGHGAQ…IAQLHCRGAE (314 aa)). The interval 925 to 1044 (HTLLGQRIPV…AYWDRKVLGS (120 aa)) is N-terminal hotdog fold. The segment at 925-1196 (HTLLGQRIPV…FTAMRFSEIE (272 aa)) is dehydratase (DH) domain. Residues 925–1201 (HTLLGQRIPV…FSEIEGTPGV (277 aa)) form the PKS/mFAS DH domain. Histidine 957 (proton acceptor; for dehydratase activity) is an active-site residue. A C-terminal hotdog fold region spans residues 1058–1201 (TTKLADNFSI…FSEIEGTPGV (144 aa)). Catalysis depends on aspartate 1113, which acts as the Proton donor; for dehydratase activity. Residues 1205 to 1657 (MESLVHQIAW…LRSLAIDDGE (453 aa)) are product template (PT) domain. The 75-residue stretch at 1700 to 1774 (AYLDEKIRGC…HLVVWFAEKI (75 aa)) folds into the Carrier domain. An O-(pantetheine 4'-phosphoryl)serine modification is found at serine 1734.

The protein resides in the cytoplasm. Its subcellular location is the cytosol. The enzyme catalyses 3 malonyl-CoA + acetyl-CoA + NADPH + 3 H(+) = 6-methylsalicylate + 3 CO2 + NADP(+) + 4 CoA + H2O. The protein operates within mycotoxin biosynthesis; patulin biosynthesis. 6-methylsalicylic acid synthase; part of the gene cluster that mediates the biosynthesis of patulin, an acetate-derived tetraketide mycotoxin produced by several fungal species that shows antimicrobial properties against several bacteria. PatK catalyzes the first step of the pathway which is the synthesis of 6-methylsalicylic acid via condensation of 1 acetate and 3 malonate units. The pathway begins with the synthesis of 6-methylsalicylic acid by the polyketide synthase (PKS) patK via condensation of acetate and malonate units. The 6-methylsalicylic acid decarboxylase patG then catalyzes the decarboxylation of 6-methylsalicylic acid to yield m-cresol (also known as 3-methylphenol). These first reactions occur in the cytosol. The intermediate m-cresol is then transported into the endoplasmic reticulum where the cytochrome P450 monooxygenase patH converts it to m-hydroxybenzyl alcohol, which is further converted to gentisyl alcohol by the cytochrome P450 monooxygenase patI. The oxidoreductases patJ and patO further convert gentisyl alcohol to isoepoxydon in the vacuole. PatN catalyzes then the transformation of isoepoxydon into phyllostine. The cluster protein patF is responsible for the conversion from phyllostine to neopatulin whereas the alcohol dehydrogenase patD converts neopatulin to E-ascladiol. The steps between isoepoxydon and E-ascladiol occur in the cytosol, and E-ascladiol is probably secreted to the extracellular space by one of the cluster-specific transporters patC or patM. Finally, the secreted patulin synthase patE catalyzes the conversion of E-ascladiol to patulin. This is 6-methylsalicylic acid synthase from Penicillium expansum (Blue mold rot fungus).